A 1749-amino-acid chain; its full sequence is Kinesin-like protein KIF13A (1749 aa).

The region spanning 5–352 is the Kinesin motor domain; that stretch reads KVKVAVRVRP…LRYADRAKRI (348 aa). 102–109 is an ATP binding site; it reads GQTGSGKS. Residues 359–431 adopt a coiled-coil conformation; that stretch reads NEDPNAKVIR…QERQRQLESM (73 aa). Residues 469–519 form the FHA domain; that stretch reads HTRVGADTSQDIQLFGIGIQPEHCEIDIAADGDITLTPKENARSCVNGTLV. Positions 552–775 form a coiled coil; that stretch reads LKDFERETSS…VPEAKRLYGK (224 aa). Disordered regions lie at residues 633–652 and 834–853; these read QQLSPERQPPSSASDRLAYS and IPERMAEDDSSENSSESGSL. Ser636 bears the Phosphoserine mark. Positions 1086 to 1126 form a coiled coil; it reads SDALIKRREYLDEQIKKVSNKKEKTEDDMEREARLVEQWVG. Position 1274 is a phosphoserine (Ser1274). Residues 1370–1383 show a composition bias toward polar residues; the sequence is LSTPNVHNVSSSRP. Disordered stretches follow at residues 1370–1402 and 1417–1436; these read LSTPNVHNVSSSRPDLSGFDEDDKGWPENQLDV and TLPRDSPRRSKEGCPSENPH. The span at 1421–1430 shows a compositional bias: basic and acidic residues; sequence DSPRRSKEGC. Phosphoserine is present on residues Ser1441, Ser1477, Ser1481, Ser1524, Ser1600, and Ser1650. Positions 1475 to 1499 form a coiled coil; it reads LLSQEDSEEEENELEALSRKLMLTQ. 2 disordered regions span residues 1584 to 1665 and 1698 to 1749; these read CAEP…GHQA and DFDG…TATR. The span at 1719-1741 shows a compositional bias: basic and acidic residues; that stretch reads ETDHKGIPERPPDADRLHPKIEN.

Belongs to the TRAFAC class myosin-kinesin ATPase superfamily. Kinesin family. As to quaternary structure, interacts with AP1G1 and AP1G2. Interacts with ZFYVE26. Interacts with AP2B1.

Its subcellular location is the golgi apparatus membrane. The protein resides in the cytoplasm. The protein localises to the cytoskeleton. It is found in the microtubule organizing center. It localises to the centrosome. Its subcellular location is the midbody. The protein resides in the endosome membrane. In terms of biological role, plus end-directed microtubule-dependent motor protein involved in intracellular transport and regulating various processes such as mannose-6-phosphate receptor (M6PR) transport to the plasma membrane, endosomal sorting during melanosome biogenesis and cytokinesis. During melanosome maturation, required for delivering melanogenic enzymes from recycling endosomes to nascent melanosomes by creating peripheral recycling endosomal subdomains in melanocytes. Also required for the abscission step in cytokinesis: mediates translocation of ZFYVE26, and possibly TTC19, to the midbody during cytokinesis. Mediates the transport of M6PR-containing vesicles from trans-Golgi network to the plasma membrane via direct interaction with the AP-1 complex. This is Kinesin-like protein KIF13A (Kif13a) from Mus musculus (Mouse).